The primary structure comprises 203 residues: ATP phosphoribosyltransferase (203 aa).

It belongs to the ATP phosphoribosyltransferase family. Short subfamily. As to quaternary structure, heteromultimer composed of HisG and HisZ subunits.

The protein resides in the cytoplasm. The enzyme catalyses 1-(5-phospho-beta-D-ribosyl)-ATP + diphosphate = 5-phospho-alpha-D-ribose 1-diphosphate + ATP. It functions in the pathway amino-acid biosynthesis; L-histidine biosynthesis; L-histidine from 5-phospho-alpha-D-ribose 1-diphosphate: step 1/9. Its function is as follows. Catalyzes the condensation of ATP and 5-phosphoribose 1-diphosphate to form N'-(5'-phosphoribosyl)-ATP (PR-ATP). Has a crucial role in the pathway because the rate of histidine biosynthesis seems to be controlled primarily by regulation of HisG enzymatic activity. The polypeptide is ATP phosphoribosyltransferase (Campylobacter fetus subsp. fetus (strain 82-40)).